The sequence spans 664 residues: Glycine--tRNA ligase beta subunit (664 aa).

Belongs to the class-II aminoacyl-tRNA synthetase family. In terms of assembly, tetramer of two alpha and two beta subunits.

It localises to the cytoplasm. It catalyses the reaction tRNA(Gly) + glycine + ATP = glycyl-tRNA(Gly) + AMP + diphosphate. The chain is Glycine--tRNA ligase beta subunit from Rickettsia conorii (strain ATCC VR-613 / Malish 7).